Reading from the N-terminus, the 21-residue chain is Japonicin-2 (21 aa).

C14 and C21 form a disulfide bridge.

Expressed by the skin glands.

Its subcellular location is the secreted. Antibacterial activity against the Gram-negative bacterium E.coli and the Gram-positive bacterium S.aureus. The chain is Japonicin-2 from Rana japonica (Japanese reddish frog).